A 670-amino-acid polypeptide reads, in one-letter code: Microtubule-associated protein ssm4 (670 aa).

One can recognise a CAP-Gly domain in the interval 23–65; that stretch reads GSTDFESGIWLGVELLNGKGKNDGSVKGKRYFSCEKGKGIFVR. 2 coiled-coil regions span residues 209-254 and 404-582; these read KSEL…KNSI and VKTR…KLAD. Residue serine 460 is modified to Phosphoserine. Threonine 606 is modified (phosphothreonine).

It localises to the cytoplasm. Its subcellular location is the cytoskeleton. It is found in the spindle. Its function is as follows. Binds to nuclear microtubules with the effect of either modifying their structure or function. This then promotes meiotic nuclear division. This Schizosaccharomyces pombe (strain 972 / ATCC 24843) (Fission yeast) protein is Microtubule-associated protein ssm4 (ssm4).